The sequence spans 695 residues: Pre-mRNA-splicing factor clf-1 (695 aa).

HAT repeat units lie at residues 52–84 (EYQGRKRKEFEDYVRRNRVRLSNWLQYAQWELE), 86–118 (KEFARARSVFERALDVHPNNTQLWIRYVQAEIK), 120–152 (RNINHARNLLDRAVTRLPRVTSLWYQYLYVMEM), 154–185 (GDIPGTRQVFDRWMKWQPDEQAWSAYIRLEKR), 187–218 (GEFDRAREIFRAFTAVHPEPRTWLKWAKFEEE), 220–259 (GTSDTVREVFQTAIQTIAETLGDDAVDERIFIAFARYEAR), 261–295 (REYERARAIYKFGLDNLPRSKSMTLHAHYTTFEKQ), 305–337 (VILTKRRRLYEEQVKENAKNYDVWFDFARLEES), 339–373 (GDVDRTREVYERAIAQVPPTQEKRHWRRYIFLFLF), 383–419 (KDIGRARQIYDTCLNLIPHKKFTFAKVWVAKAHFEIR), 421–452 (GQLTTARKTLGRAIGMCPKDKIFKEYILLEQK), 454–486 (YEFERCRTLYEKHVMYNPANCQTWIKWAELERG), 488–522 (DDLERTRAIFELAVSQPILDMPEVVWKAYIDFEEE), 524–555 (GEYERTRALYERLLEKADHPKVWISYAQFEIN), 578–616 (EAKARARKIFERAHKSMKERELKAERVSLLNAWLAFEKT), and 621–654 (EDIEKIQKQMPRKTKKKRKLEDDTWEEYVDYIFP).

Belongs to the crooked-neck family. Associated with the spliceosome.

The protein resides in the nucleus. Functionally, involved in pre-mRNA splicing and cell cycle progression. Required for the spliceosome assembly and initiation of the DNA replication. This is Pre-mRNA-splicing factor clf-1 (clf-1) from Neurospora crassa (strain ATCC 24698 / 74-OR23-1A / CBS 708.71 / DSM 1257 / FGSC 987).